The chain runs to 275 residues: Large ribosomal subunit protein uL2c (275 aa).

Residues 224–263 (VMNPVDHPHGGGEGRAPIGRKRPLTPWGRPALGKKSRKNH) form a disordered region.

Belongs to the universal ribosomal protein uL2 family. Part of the 50S ribosomal subunit.

It is found in the plastid. The protein resides in the chloroplast. The polypeptide is Large ribosomal subunit protein uL2c (rpl2) (Chaetosphaeridium globosum (Charophycean green alga)).